Reading from the N-terminus, the 539-residue chain is Transcription factor prr1 (539 aa).

A DNA-binding region spans residues 7 to 111; that stretch reads SSDFVRKLFN…LLDNIKRKAP (105 aa). Threonine 221 bears the Phosphothreonine mark. Serine 223 is subject to Phosphoserine. The span at 251–263 shows a compositional bias: polar residues; that stretch reads GTAQPSLYNTPSS. Residues 251–281 form a disordered region; sequence GTAQPSLYNTPSSDYELANQEKPADSMASAA. One can recognise a Response regulatory domain in the interval 369-483; that stretch reads RILLVEDDEL…TLLQLLKKQL (115 aa). A 4-aspartylphosphate modification is found at aspartate 418.

In the N-terminal section; belongs to the HSF family.

The protein resides in the nucleus. Functionally, involved in oxidative stress. Transcription factor that acts upon trr1 and ctt1. The sequence is that of Transcription factor prr1 (prr1) from Schizosaccharomyces pombe (strain 972 / ATCC 24843) (Fission yeast).